A 646-amino-acid chain; its full sequence is MNIRSNPDTTRPAVTTGGLPSSRKIYAVPATAPDLRVPLREIMLSEGAGEPNLPVYDTSGPYTDPGVTIDVNKGLSRARTEWVKQRGGVEQYEGRDIKPEDNGNVGAAHAAKSFTAHHQPLRGVGDAPITQYEFARKGIITKEMIYVAERENLGRKQQLERAEAALADGESFGAAVPAFITPEFVRDEIARGRAIIPANINHGELEPMIIGRNFLTKINANIGNSAVTSSVEEEVDKMVWAIRWGADTVMDLSTGRNIHTTREWILRNSPVPIGTVPIYQALEKCDGDPVKLTWELYKDTLIEQAEQGVDYFTIHAGVRLQYIHLTADRVTGIVSRGGSIMAKWCLAHHQESFLYTHFDEICDLMRKYDVSFSLGDGLRPGSIADANDRAQFAELETLGELTKIAWAKGCQVMIEGPGHVPLHKIKINMDKQLKECGEAPFYTLGPLTTDIAPGYDHITSGIGAAMIGWFGCAMLCYVTPKEHLGLPDRNDVKTGVITYKIAAHAADLGKGHPAAQLRDDALSRARFDFRWQDQFNLGLDPDTAKAFHDETLPKEAHKVAHFCSMCGPKFCSMKITQDVRDYAAGLGDNEKAALNLAGAGSFGSVGMTMSGVIEDGMAQMSEKFRDMGEKLYLDAEKVKESNKALS.

Residues 1–13 show a composition bias toward polar residues; that stretch reads MNIRSNPDTTRPA. The disordered stretch occupies residues 1-21; that stretch reads MNIRSNPDTTRPAVTTGGLPS. Residues Asn-221, Met-250, Tyr-279, His-315, 335-337, 376-379, and Glu-415 contribute to the substrate site; these read SRG and DGLR. His-419 contributes to the Zn(2+) binding site. Tyr-442 contacts substrate. A Zn(2+)-binding site is contributed by His-483. Residues Cys-563, Cys-566, and Cys-571 each contribute to the [4Fe-4S] cluster site.

This sequence belongs to the ThiC family. As to quaternary structure, homodimer. [4Fe-4S] cluster is required as a cofactor.

It catalyses the reaction 5-amino-1-(5-phospho-beta-D-ribosyl)imidazole + S-adenosyl-L-methionine = 4-amino-2-methyl-5-(phosphooxymethyl)pyrimidine + CO + 5'-deoxyadenosine + formate + L-methionine + 3 H(+). Its pathway is cofactor biosynthesis; thiamine diphosphate biosynthesis. Functionally, catalyzes the synthesis of the hydroxymethylpyrimidine phosphate (HMP-P) moiety of thiamine from aminoimidazole ribotide (AIR) in a radical S-adenosyl-L-methionine (SAM)-dependent reaction. This Rhodopseudomonas palustris (strain HaA2) protein is Phosphomethylpyrimidine synthase.